We begin with the raw amino-acid sequence, 501 residues long: Pyruvate dehydrogenase protein X component, mitochondrial (501 aa).

The transit peptide at 1-53 (MAASWRLHCNQPLLRYLLGFSSRRSLGLAQGAAAWPVDRGASWRWFHSTQLLQ) directs the protein to the mitochondrion. The Lipoyl-binding domain occupies 56–132 (PIKVLMPSLS…QLGSLIALMV (77 aa)). Lysine 97 carries the post-translational modification N6-lipoyllysine. The interval 145–176 (KDVSAPPPVSKPPAPTQPSPQPQIPCPARKEH) is disordered. The segment covering 149 to 169 (APPPVSKPPAPTQPSPQPQIP) has biased composition (pro residues). The region spanning 183–220 (RLSPAARNILEKHSLDASQGTATGPRGIFTKEDALKLV) is the Peripheral subunit-binding (PSBD) domain. Residue lysine 194 is modified to N6-acetyllysine. Phosphoserine is present on serine 196. The segment at 228 to 256 (ITESRPASAPPPSLSASVPPQATAGPSYP) is disordered. At lysine 394 the chain carries N6-succinyllysine.

It belongs to the 2-oxoacid dehydrogenase family. In terms of assembly, part of the inner core of the multimeric pyruvate dehydrogenase complex that is composed of about 48 DLAT and 12 PDHX molecules. This core binds multiple copies of pyruvate dehydrogenase (subunits PDH1A and PDHB, E1), dihydrolipoamide acetyltransferase (DLAT, E2) and lipoamide dehydrogenase (DLD, E3). Interacts with SIRT4. Interacts with DLD. Delipoylated at Lys-97 by SIRT4, delipoylation decreases the PHD complex activity.

The protein localises to the mitochondrion matrix. In terms of biological role, required for anchoring dihydrolipoamide dehydrogenase (E3) to the dihydrolipoamide transacetylase (E2) core of the pyruvate dehydrogenase complexes of eukaryotes. This specific binding is essential for a functional PDH complex. The chain is Pyruvate dehydrogenase protein X component, mitochondrial (Pdhx) from Mus musculus (Mouse).